The sequence spans 596 residues: Protein kinase C iota type (596 aa).

Positions 1-12 (MPTQRDSSTMSH) are enriched in polar residues. Positions 1–21 (MPTQRDSSTMSHTVACGGGGD) are disordered. Residue Pro2 is modified to N-acetylproline. Residues 2–28 (PTQRDSSTMSHTVACGGGGDHSHQVRV) form a required for interaction with RAB2 region. The interval 2–253 (PTQRDSSTMS…KASSSLGLQD (252 aa)) is regulatory domain. Thr3 is subject to Phosphothreonine. Residues Ser7 and Ser8 each carry the phosphoserine modification. Position 9 is a phosphothreonine (Thr9). The PB1 domain maps to 25 to 108 (QVRVKAYYRG…SELLIHVFPC (84 aa)). The interaction with PARD6A stretch occupies residues 72–91 (DEEGDPCTVSSQLELEEAFR). Positions 125 to 134 (YRRGARRWRK) match the Pseudosubstrate motif. The Phorbol-ester/DAG-type zinc finger occupies 140–190 (GHTFQAKRFNRRAHCAICTDRIWGLGRQGYKCINCKLLVHKKCHKLVTIEC). In terms of domain architecture, Protein kinase spans 254 to 522 (FDLLRVIGRG…FADIQGHPFF (269 aa)). Residue 260–268 (IGRGSYAKV) participates in ATP binding. Phosphotyrosine; by SRC is present on residues Tyr265 and Tyr280. An ATP-binding site is contributed by Lys283. Residue Tyr334 is modified to Phosphotyrosine; by SRC. The active-site Proton acceptor is Asp378. Thr412 is modified (phosphothreonine; by PDPK1). In terms of domain architecture, AGC-kinase C-terminal spans 523–594 (RNVDWDMMEQ…INPLLMSAEE (72 aa)). Thr564 carries the phosphothreonine modification.

This sequence belongs to the protein kinase superfamily. AGC Ser/Thr protein kinase family. PKC subfamily. In terms of assembly, forms a complex with SQSTM1 and MP2K5. Interacts directly with SQSTM1. Interacts with IKBKB. Interacts with PARD6A, PARD6B and PARD6G. Part of a quaternary complex containing aPKC, PARD3, a PARD6 protein (PARD6A, PARD6B or PARD6G) and a GTPase protein (CDC42 or RAC1). Part of a complex with LLGL1 and PARD6B. Interacts with ADAP1/CENTA1. Interaction with SMG1, through the ZN-finger domain, activates the kinase activity. Interacts with CDK7. Forms a complex with RAB2A and GAPDH involved in recruitment onto the membrane of vesicular tubular clusters (VTCs). Interacts with ECT2 ('Thr-359' phosphorylated form). Interacts with VAMP2. Interacts with WDFY2 (via WD repeats 1-3). In terms of processing, phosphorylation at Thr-412 in the activation loop is not mandatory for activation. Upon neuronal growth factor (NGF) stimulation, phosphorylated by SRC at Tyr-265, Tyr-280 and Tyr-334. Phosphorylation at Tyr-265 facilitates binding to KPNB1/importin-beta regulating entry of PRKCI into the nucleus. Phosphorylation on Tyr-334 is important for NF-kappa-B stimulation. Phosphorylated at Thr-564 during the initial phase of long term potentiation. In terms of tissue distribution, expressed in dorsal hippocampus (at protein level).

The protein resides in the cytoplasm. It localises to the membrane. It is found in the endosome. Its subcellular location is the nucleus. The catalysed reaction is L-seryl-[protein] + ATP = O-phospho-L-seryl-[protein] + ADP + H(+). It catalyses the reaction L-threonyl-[protein] + ATP = O-phospho-L-threonyl-[protein] + ADP + H(+). Atypical PKCs (PRKCI and PRKCZ) exhibit an elevated basal enzymatic activity (that may be due to the interaction with SMG1 or SQSTM1) and are not regulated by diacylglycerol, phosphatidylserine, phorbol esters or calcium ions. Two specific sites, Thr-412 (activation loop of the kinase domain) and Thr-564 (turn motif), need to be phosphorylated for its full activation. Might also be a target for novel lipid activators that are elevated during nutrient-stimulated insulin secretion. Its function is as follows. Calcium- and diacylglycerol-independent serine/ threonine-protein kinase that plays a general protective role against apoptotic stimuli, is involved in NF-kappa-B activation, cell survival, differentiation and polarity, and contributes to the regulation of microtubule dynamics in the early secretory pathway. Is necessary for BCR-ABL oncogene-mediated resistance to apoptotic drug in leukemia cells, protecting leukemia cells against drug-induced apoptosis. In cultured neurons, prevents amyloid beta protein-induced apoptosis by interrupting cell death process at a very early step. In glioblastoma cells, may function downstream of phosphatidylinositol 3-kinase (PI3K) and PDPK1 in the promotion of cell survival by phosphorylating and inhibiting the pro-apoptotic factor BAD. Can form a protein complex in non-small cell lung cancer (NSCLC) cells with PARD6A and ECT2 and regulate ECT2 oncogenic activity by phosphorylation, which in turn promotes transformed growth and invasion. In response to nerve growth factor (NGF), acts downstream of SRC to phosphorylate and activate IRAK1, allowing the subsequent activation of NF-kappa-B and neuronal cell survival. Functions in the organization of the apical domain in epithelial cells by phosphorylating EZR. This step is crucial for activation and normal distribution of EZR at the early stages of intestinal epithelial cell differentiation. Forms a protein complex with LLGL1 and PARD6B independently of PARD3 to regulate epithelial cell polarity. Plays a role in microtubule dynamics in the early secretory pathway through interaction with RAB2A and GAPDH and recruitment to vesicular tubular clusters (VTCs). In human coronary artery endothelial cells (HCAEC), is activated by saturated fatty acids and mediates lipid-induced apoptosis. Downstream of PI3K is required for insulin-stimulated glucose transport. Activates RAB4A and promotes its association with KIF3A which is required for the insulin-induced SLC2A4/GLUT4 translocation in adipocytes. Is essential in early embryogenesis and development of differentiating photoreceptors by playing a role in the establishment of epithelial and neuronal polarity. Involved in early synaptic long term potentiation phase in CA1 hippocampal cells and short term memory formation. In Rattus norvegicus (Rat), this protein is Protein kinase C iota type (Prkci).